We begin with the raw amino-acid sequence, 440 residues long: Xylose isomerase (440 aa).

Catalysis depends on residues H101 and D104. Mg(2+)-binding residues include E232, E268, H271, D296, D307, D309, and D339.

Belongs to the xylose isomerase family. In terms of assembly, homotetramer. The cofactor is Mg(2+).

It is found in the cytoplasm. The catalysed reaction is alpha-D-xylose = alpha-D-xylulofuranose. In Salmonella paratyphi B (strain ATCC BAA-1250 / SPB7), this protein is Xylose isomerase.